Reading from the N-terminus, the 196-residue chain is Agamous-like MADS-box protein AGL31 (196 aa).

Positions 1–61 (MGRKKVEIKR…GKLYKSASGD (61 aa)) constitute an MADS-box domain. The region spanning 80-170 (ALDLAEKTRN…ASQVGKKTFL (91 aa)) is the K-box domain.

Expressed in most plant tissues, roots, seedlings, leaves, stems, inflorescences, pollen, siliques and flowers.

Its subcellular location is the nucleus. In terms of biological role, probable transcription factor that prevents vernalization by short periods of cold. Acts as a floral repressor. The polypeptide is Agamous-like MADS-box protein AGL31 (AGL31) (Arabidopsis thaliana (Mouse-ear cress)).